The chain runs to 217 residues: FGFR1 oncogene partner 2 homolog (217 aa).

2 coiled-coil regions span residues 6 to 106 and 163 to 188; these read TIEK…MSKY and KEQE…TRES. The interval 194-217 is disordered; it reads KEDASESTSLSGLVTSSDLSLRKS. The span at 199-217 shows a compositional bias: polar residues; that stretch reads ESTSLSGLVTSSDLSLRKS.

Belongs to the SIKE family.

The protein resides in the cytoplasm. In Gallus gallus (Chicken), this protein is FGFR1 oncogene partner 2 homolog (FGFR1OP2).